Consider the following 85-residue polypeptide: Probable oxaloacetate decarboxylase gamma chain (85 aa).

Residues 11–33 (AATLMVTGMAVVFIFLTILVYLV) form a helical membrane-spanning segment.

It belongs to the OadG family. Heterotrimer of an alpha, a beta and a gamma subunit. Na(+) serves as cofactor.

It localises to the cell membrane. The enzyme catalyses oxaloacetate + 2 Na(+)(in) + H(+) = pyruvate + 2 Na(+)(out) + CO2. Catalyzes the decarboxylation of oxaloacetate coupled to Na(+) translocation. The protein is Probable oxaloacetate decarboxylase gamma chain of Vibrio parahaemolyticus serotype O3:K6 (strain RIMD 2210633).